Reading from the N-terminus, the 407-residue chain is NADH dehydrogenase [ubiquinone] 1 alpha subcomplex subunit 10, mitochondrial (407 aa).

Residues 1–60 (MTAVFRVGLVRLVSRATQSPNLLQAQTNALPAAFQQRCSISGKTMRGGPRVPKAAPYPYK) constitute a mitochondrion transit peptide.

Belongs to the complex I NDUFA10 subunit family. Complex I is composed of 45 different subunits. This a component of the hydrophobic protein fraction. Forms a complex including sicily, ND-42 and Hsp83; the complex is necessary to chaperone ND-42 in the cytoplasm before mitochondrial import; the interaction between sicily and ND-42 is direct and occurs preferably between the unprocessed forms in the cytoplasm. The cofactor is FAD. As to expression, expressed in muscles (at protein level).

The protein resides in the mitochondrion matrix. The protein localises to the cytoplasm. Its function is as follows. Accessory subunit of the mitochondrial membrane respiratory chain NADH dehydrogenase (Complex I), that is believed not to be involved in catalysis. Complex I functions in the transfer of electrons from NADH to the respiratory chain. The immediate electron acceptor for the enzyme is believed to be ubiquinone. The chain is NADH dehydrogenase [ubiquinone] 1 alpha subcomplex subunit 10, mitochondrial from Drosophila melanogaster (Fruit fly).